A 178-amino-acid chain; its full sequence is Aspartate carbamoyltransferase regulatory chain (178 aa).

A compositionally biased stretch (basic and acidic residues) spans 1–15 (MNDREPNQKESKESV). The segment at 1–23 (MNDREPNQKESKESVNDAVPRAR) is disordered. The Zn(2+) site is built by C133, C138, C159, and C162.

This sequence belongs to the PyrI family. Contains catalytic and regulatory chains. The cofactor is Zn(2+).

Its function is as follows. Involved in allosteric regulation of aspartate carbamoyltransferase. This is Aspartate carbamoyltransferase regulatory chain from Haloquadratum walsbyi (strain DSM 16790 / HBSQ001).